We begin with the raw amino-acid sequence, 666 residues long: Peptidase S41 family protein phomP1 (666 aa).

A signal peptide spans 1–27 (MSSFLVQTAVVRLFLLGVVFWFPFALS). Residues Asn-70, Asn-214, and Asn-234 are each glycosylated (N-linked (GlcNAc...) asparagine). The peptidase S41 domain stretch occupies residues 303 to 504 (DVAVLQITSF…LLQAQGVRTV (202 aa)). Residues Asn-555 and Asn-612 are each glycosylated (N-linked (GlcNAc...) asparagine).

It belongs to the peptidase S41A family.

The protein operates within mycotoxin biosynthesis. Its function is as follows. Peptidase S41 family protein; part of the gene cluster that mediates the biosynthesis of the phomopsins, a group of hexapeptide mycotoxins which infects lupins and causes lupinosis disease in livestock. Within the pathway, phomP1 and phomP1' are probably involved in the processing of the phomA and phomA' precursors. The pathway starts with the processing of the precursor phomA by several endopeptidases including kexin proteases as well as the cluster-specific S41 family peptidase phomP1 and the oligopeptidase phomG to produce 10 identical copies of the hexapeptide Tyr-Val-Ile-Pro-Ile-Asp. After being excised from the precursor peptide, the core peptides are cyclized and modified post-translationally by enzymes encoded within the gene cluster. The timing and order of proteolysis of the phomA precursor and PTMs are still unknown. Two tyrosinase-like enzymes, phomQ1 and phomQ2, catalyze the chlorination and hydroxylation of Tyr, respectively. PhomYb, is proposed to be involved in the construction of the macrocyclic structure. The other 4 ustYa family proteins may be involved in PTMs that generate the unique structure of phomopsin A. PhomYa is required for the hydroxylation of C-beta of Tyr. PhomYc, phomYd, and phomYe are responsible for the biosynthesis of 2,3-dehydroisoleucine (dIle), 2,3-dehydroaspartic acid (dAsp), and 3,4-dehydroproline (dPro), respectively. While dIle formation by phomYc is indispensable for the installation of dAsp by phomYd, the order of the other PTMs have not been elucidated yet. Most of the biosynthetic enzymes likely have broad substrate specificity, and thus, there might be a metabolic grid from a precursor to phomopsin A. The enzyme(s) responsible for the biosynthesis of 3,4-dehydrovaline (dVal) have also not been identified yet. Finally, phomM acts as an S-adenosylmethionine-dependent alpha-N-methyltransferase that catalyzes two successive N-methylation reactions, converting N-desmethyl-phomopsin A to phomopsin A and phomopsin A further to an N,N-dimethylated congener called phomopsin E. This is Peptidase S41 family protein phomP1 from Diaporthe leptostromiformis (Lupinosis disease fungus).